Reading from the N-terminus, the 264-residue chain is Thymidylate synthase (264 aa).

DUMP contacts are provided by residues Arg-21 and 126–127 (RR). The Nucleophile role is filled by Cys-146. DUMP-binding positions include 166-169 (RSAD), Asn-177, and 207-209 (HLY). (6R)-5,10-methylene-5,6,7,8-tetrahydrofolate is bound at residue Asp-169. Residue Ala-263 participates in (6R)-5,10-methylene-5,6,7,8-tetrahydrofolate binding.

This sequence belongs to the thymidylate synthase family. Bacterial-type ThyA subfamily. Homodimer.

The protein localises to the cytoplasm. It catalyses the reaction dUMP + (6R)-5,10-methylene-5,6,7,8-tetrahydrofolate = 7,8-dihydrofolate + dTMP. It participates in pyrimidine metabolism; dTTP biosynthesis. In terms of biological role, catalyzes the reductive methylation of 2'-deoxyuridine-5'-monophosphate (dUMP) to 2'-deoxythymidine-5'-monophosphate (dTMP) while utilizing 5,10-methylenetetrahydrofolate (mTHF) as the methyl donor and reductant in the reaction, yielding dihydrofolate (DHF) as a by-product. This enzymatic reaction provides an intracellular de novo source of dTMP, an essential precursor for DNA biosynthesis. This chain is Thymidylate synthase, found in Afipia carboxidovorans (strain ATCC 49405 / DSM 1227 / KCTC 32145 / OM5) (Oligotropha carboxidovorans).